Consider the following 153-residue polypeptide: Cytochrome c-type biogenesis protein CcmE (153 aa).

Topologically, residues 1 to 7 (MTRKKRR) are cytoplasmic. Residues 8–28 (LYFVVLGMLALFAAAGLTLTA) traverse the membrane as a helical; Signal-anchor for type II membrane protein segment. Residues 29-153 (FQDNLVFFYS…PPTAAAAPAP (125 aa)) are Periplasmic-facing. Residues histidine 121 and tyrosine 125 each coordinate heme. Positions 132 to 153 (ESLKASGKWQHGPPTAAAAPAP) are disordered. Residues 144–153 (PPTAAAAPAP) show a composition bias toward low complexity.

This sequence belongs to the CcmE/CycJ family.

It localises to the cell inner membrane. Functionally, heme chaperone required for the biogenesis of c-type cytochromes. Transiently binds heme delivered by CcmC and transfers the heme to apo-cytochromes in a process facilitated by CcmF and CcmH. The sequence is that of Cytochrome c-type biogenesis protein CcmE from Rhodospirillum rubrum (strain ATCC 11170 / ATH 1.1.1 / DSM 467 / LMG 4362 / NCIMB 8255 / S1).